Here is a 208-residue protein sequence, read N- to C-terminus: NADH-quinone oxidoreductase subunit I 2 (208 aa).

4Fe-4S ferredoxin-type domains are found at residues 79-109 (ILVE…IEGK) and 119-148 (SVFN…QTDI). 8 residues coordinate [4Fe-4S] cluster: C88, C91, C94, C98, C128, C131, C134, and C138.

It belongs to the complex I 23 kDa subunit family. NDH-1 is composed of 14 different subunits. Subunits NuoA, H, J, K, L, M, N constitute the membrane sector of the complex. [4Fe-4S] cluster serves as cofactor.

It is found in the cell inner membrane. It catalyses the reaction a quinone + NADH + 5 H(+)(in) = a quinol + NAD(+) + 4 H(+)(out). NDH-1 shuttles electrons from NADH, via FMN and iron-sulfur (Fe-S) centers, to quinones in the respiratory chain. The immediate electron acceptor for the enzyme in this species is believed to be ubiquinone. Couples the redox reaction to proton translocation (for every two electrons transferred, four hydrogen ions are translocated across the cytoplasmic membrane), and thus conserves the redox energy in a proton gradient. This is NADH-quinone oxidoreductase subunit I 2 from Aquifex aeolicus (strain VF5).